We begin with the raw amino-acid sequence, 483 residues long: MHQLTLAEIARGLADKSFSSEELTGALLSRIKQLDPQLNSFITVTEEQALHQARAADARRAAGETGALLGAPIAHKDLFCTQGVRTSCGSKMLDNFTAPYDATVVAKLAEAGMVTLGKTNMDEFAMGSANESSHYGAVKNPWNLEHVPGGSSGGSAAAVAARLLPATTGTDTGGSIRQPAALTNLTGLKPTYGRVSRWGMIAYASSLDQGGPLARTAEDCALLLQGMAGFDSKDSTSVEEPVPNFSADLNASLQGLRIGLPKEYFGAGLDPRIAERVQASVKELEKLGAVVKEISLPNMQHAIAAYYVIAPAEASSNLSRFDGVRFGHRCADPKDLTDLYKRSRGEGFGVEVQRRIMVGTYALSAGYYDAYYVKAQQIRRLIKNDFVAAFNDVDVIIGPTTPNPAWKIGAKAGDPIAEYLEDLYTITANLAGLPGLSMPAGFVDGLPVGVQLLAPYFQEGRLLNIAHRYQQVTDWHTRAPNGF.

Residues Lys-76 and Ser-151 each act as charge relay system in the active site. The active-site Acyl-ester intermediate is Ser-175.

It belongs to the amidase family. GatA subfamily. Heterotrimer of A, B and C subunits.

The enzyme catalyses L-glutamyl-tRNA(Gln) + L-glutamine + ATP + H2O = L-glutaminyl-tRNA(Gln) + L-glutamate + ADP + phosphate + H(+). Allows the formation of correctly charged Gln-tRNA(Gln) through the transamidation of misacylated Glu-tRNA(Gln) in organisms which lack glutaminyl-tRNA synthetase. The reaction takes place in the presence of glutamine and ATP through an activated gamma-phospho-Glu-tRNA(Gln). The protein is Glutamyl-tRNA(Gln) amidotransferase subunit A of Pseudomonas entomophila (strain L48).